A 71-amino-acid chain; its full sequence is SPbeta prophage-derived uncharacterized protein YorP (71 aa).

In Bacillus subtilis (strain 168), this protein is SPbeta prophage-derived uncharacterized protein YorP (yorP).